Here is a 326-residue protein sequence, read N- to C-terminus: Acetyl-coenzyme A carboxylase carboxyl transferase subunit beta (326 aa).

Residues 32–301 form the CoA carboxyltransferase N-terminal domain; it reads LWTKCPACGV…ILPPLNADSN (270 aa). Residues C36, C39, C55, and C58 each coordinate Zn(2+). The C4-type zinc-finger motif lies at 36–58; sequence CPACGVLTYTKDLQGNWMVCVEC.

The protein belongs to the AccD/PCCB family. As to quaternary structure, acetyl-CoA carboxylase is a heterohexamer composed of biotin carboxyl carrier protein (AccB), biotin carboxylase (AccC) and two subunits each of ACCase subunit alpha (AccA) and ACCase subunit beta (AccD). The cofactor is Zn(2+).

It localises to the cytoplasm. It carries out the reaction N(6)-carboxybiotinyl-L-lysyl-[protein] + acetyl-CoA = N(6)-biotinyl-L-lysyl-[protein] + malonyl-CoA. It participates in lipid metabolism; malonyl-CoA biosynthesis; malonyl-CoA from acetyl-CoA: step 1/1. Component of the acetyl coenzyme A carboxylase (ACC) complex. Biotin carboxylase (BC) catalyzes the carboxylation of biotin on its carrier protein (BCCP) and then the CO(2) group is transferred by the transcarboxylase to acetyl-CoA to form malonyl-CoA. This is Acetyl-coenzyme A carboxylase carboxyl transferase subunit beta from Synechocystis sp. (strain ATCC 27184 / PCC 6803 / Kazusa).